Reading from the N-terminus, the 368-residue chain is Propane 2-monooxygenase, hydroxylase component small subunit (368 aa).

The tract at residues 1–33 (MSAPAQPRERSFPSIEFTDAEADAREFPSSRSR) is disordered.

It belongs to the TmoE/XamoE family. As to quaternary structure, the propane 2-monooxygenase multicomponent enzyme system is composed of an electron transfer component and a monooxygenase component interacting with the effector protein PrmD. The electron transfer component is composed of a reductase (PrmB), and the monooxygenase component is formed by a large subunit (PrmA) and a small subunit (PrmC). Probably requires the presence of the chaperonin-like protein PrmG to ensure a productive folding, resulting of a soluble PrmC, which leads to the active form of PrmABCD.

It carries out the reaction propane + NADH + O2 + H(+) = propan-2-ol + NAD(+) + H2O. The enzyme catalyses phenol + NADH + O2 + H(+) = hydroquinone + NAD(+) + H2O. In terms of biological role, component of the propane 2-monooxygenase multicomponent enzyme system which is involved in the degradation of propane via the O2-dependent hydroxylation of propane. Under acetone induction, also able to catalyze the oxidation of phenol to yield hydroquinone. The sequence is that of Propane 2-monooxygenase, hydroxylase component small subunit from Gordonia sp. (strain TY-5).